We begin with the raw amino-acid sequence, 433 residues long: GPI mannosyltransferase 2 (433 aa).

Position 1 (methionine 1) is a topological domain, cytoplasmic. A helical membrane pass occupies residues 2-22 (IVGLTLYFVLFRSIQYLLVFL). Residues 23 to 109 (TPIRQFDTST…NNDSIYHALR (87 aa)) lie on the Lumenal side of the membrane. N-linked (GlcNAc...) asparagine glycans are attached at residues asparagine 69 and asparagine 101. A helical transmembrane segment spans residues 110–130 (VGVAIENVLFYLSGIVLYFLT). Topologically, residues 131–161 (KKIFSQNIRQSQFARTIAKKTSLLFFLTSAA) are cytoplasmic. The helical transmembrane segment at 162–182 (GFLTSIYSEPLSFFFAFVGIW) threads the bilayer. The Lumenal portion of the chain corresponds to 183-215 (SRECSISVPVLGQFDISWRYWFPYSFISMACFT). A helical membrane pass occupies residues 216 to 236 (LASLNRSNCVLLGIYFIFDLI). Residues 237-243 (ELTKNRK) lie on the Cytoplasmic side of the membrane. The helical transmembrane segment at 244-264 (FVKAICFPLLSGSLMFSALLY) threads the bilayer. Residues 265–318 (QQYYLPYKTFCPQRGEWCKSQLFSSIFITKTSLYSYIQSHYWGVGLLKYWTPNN) are Lumenal-facing. The chain crosses the membrane as a helical span at residues 319–339 (IPNFLFAVPNIIILIYSSIYF). At 340 to 350 (SKIYPSYNLKA) the chain is on the cytoplasmic side. The helical transmembrane segment at 351–371 (LVWITRALVVIVCFFAHVQIL) threads the bilayer. At 372-409 (NRIASFLPLHLWYLADRLVKTSDPKKMENPKGDDKIVK) the chain is on the lumenal side. The helical transmembrane segment at 410–430 (FYIYWLAFWIPLQTILFAAFL) threads the bilayer. Over 431–433 (PPA) the chain is Cytoplasmic.

It belongs to the PIGV family. In terms of assembly, part of the GPI mannosyltransferase 2 complex composed of GPI18 and PGA1.

The protein localises to the endoplasmic reticulum membrane. It participates in glycolipid biosynthesis; glycosylphosphatidylinositol-anchor biosynthesis. Its function is as follows. Mannosyltransferase involved in glycosylphosphatidylinositol-anchor biosynthesis. Responsible for the transfer of the second mannose to the glycosylphosphatidylinositol during GPI precursor assembly. In Saccharomyces cerevisiae (strain ATCC 204508 / S288c) (Baker's yeast), this protein is GPI mannosyltransferase 2 (GPI18).